The sequence spans 520 residues: GMP synthase [glutamine-hydrolyzing] (520 aa).

One can recognise a Glutamine amidotransferase type-1 domain in the interval 12–205 (KIIVLDYGSQ…AISICGGRGD (194 aa)). The Nucleophile role is filled by cysteine 89. Active-site residues include histidine 179 and glutamate 181. One can recognise a GMPS ATP-PPase domain in the interval 206 to 395 (WSMDNFIDMQ…LGMPDEVVWR (190 aa)). 233 to 239 (SGGVDSS) is an ATP binding site.

As to quaternary structure, homodimer.

It carries out the reaction XMP + L-glutamine + ATP + H2O = GMP + L-glutamate + AMP + diphosphate + 2 H(+). The protein operates within purine metabolism; GMP biosynthesis; GMP from XMP (L-Gln route): step 1/1. In terms of biological role, catalyzes the synthesis of GMP from XMP. This chain is GMP synthase [glutamine-hydrolyzing], found in Streptococcus equi subsp. equi (strain 4047).